A 549-amino-acid chain; its full sequence is 4-hydroxybutyrate--CoA ligase 2 (549 aa).

ATP contacts are provided by residues Thr-195 to Lys-203, Glu-336 to His-341, Asp-425, and Arg-440. CoA contacts are provided by residues Gly-448 to Glu-450, Lys-506, and Cys-514 to Lys-516. Lys-530 is a binding site for ATP.

Belongs to the ATP-dependent AMP-binding enzyme family. It depends on Mg(2+) as a cofactor. The cofactor is Mn(2+).

It catalyses the reaction 4-hydroxybutanoate + ATP + CoA = 4-hydroxybutanoyl-CoA + AMP + diphosphate. It carries out the reaction acetate + ATP + CoA = acetyl-CoA + AMP + diphosphate. The catalysed reaction is propanoate + ATP + CoA = propanoyl-CoA + AMP + diphosphate. The enzyme catalyses a medium-chain fatty acid + ATP + CoA = a medium-chain fatty acyl-CoA + AMP + diphosphate. In terms of biological role, catalyzes the ligation of coenzyme A (CoA) to 4-hydroxybutyrate (4HB). It can also use butyrate, valerate, propionate, acetate and 3-hydroxybutyrate (3HB) as substrates. The polypeptide is 4-hydroxybutyrate--CoA ligase 2 (Metallosphaera sedula (strain ATCC 51363 / DSM 5348 / JCM 9185 / NBRC 15509 / TH2)).